Consider the following 176-residue polypeptide: Peptide deformylase (176 aa).

Fe cation contacts are provided by Cys94 and His136. Glu137 is a catalytic residue. A Fe cation-binding site is contributed by His140.

The protein belongs to the polypeptide deformylase family. The cofactor is Fe(2+).

The catalysed reaction is N-terminal N-formyl-L-methionyl-[peptide] + H2O = N-terminal L-methionyl-[peptide] + formate. Removes the formyl group from the N-terminal Met of newly synthesized proteins. Requires at least a dipeptide for an efficient rate of reaction. N-terminal L-methionine is a prerequisite for activity but the enzyme has broad specificity at other positions. The protein is Peptide deformylase of Bartonella henselae (strain ATCC 49882 / DSM 28221 / CCUG 30454 / Houston 1) (Rochalimaea henselae).